Reading from the N-terminus, the 161-residue chain is uncharacterized protein (161 aa).

Belongs to the sapovirus VP3 family.

This is an uncharacterized protein from Sapporo virus (strain Human/United Kingdom/Manchester/1993) (Hu/SV/Man/1993/UK).